The sequence spans 1024 residues: Probable serine/threonine-protein kinase DDB_G0271682 (1024 aa).

Residues 187–261 (NIDNNNNNNN…RDNENNHNHQ (75 aa)) form a disordered region. Positions 190–244 (NNNNNNNNNNNNNNNNNNNNNNNNNNNNNNNNNNNNNNNNNNNNNNNNNNNNNNN) are enriched in low complexity. Residues 250 to 261 (RSRDNENNHNHQ) show a composition bias toward basic and acidic residues. Protein kinase domains lie at 360–609 (LLFI…LKLM) and 645–1018 (ILVT…ELLI). ATP contacts are provided by residues 366–374 (IGSGACGEV) and K387. Residue D484 is the Proton acceptor of the active site. ATP is bound by residues 651-659 (VGGNVSGNV) and K719. Composition is skewed to low complexity over residues 823–851 (NNNS…NNNN) and 862–874 (ENTN…TTTT). Residues 823–874 (NNNSNQNNNNNNNNNNNNNNNNNNNNNNNKKNDGGDDNGENTNTTTTTTTTT) form a disordered region.

The protein belongs to the protein kinase superfamily. TKL Ser/Thr protein kinase family.

The catalysed reaction is L-seryl-[protein] + ATP = O-phospho-L-seryl-[protein] + ADP + H(+). It carries out the reaction L-threonyl-[protein] + ATP = O-phospho-L-threonyl-[protein] + ADP + H(+). In Dictyostelium discoideum (Social amoeba), this protein is Probable serine/threonine-protein kinase DDB_G0271682.